Reading from the N-terminus, the 349-residue chain is Ion-translocating oxidoreductase complex subunit D (349 aa).

The next 3 helical transmembrane spans lie at 20–42 (VMQR…FGWG), 77–99 (SAML…WMIV), and 124–144 (AMAA…TWIA). Thr-185 carries the post-translational modification FMN phosphoryl threonine. 5 consecutive transmembrane segments (helical) span residues 212-232 (STGV…LVLL), 239-259 (WHIS…GFLL), 265-285 (ASPL…FIAT), 291-311 (ATSS…VYII), and 315-335 (GGYP…APFI).

It belongs to the NqrB/RnfD family. As to quaternary structure, the complex is composed of six subunits: RnfA, RnfB, RnfC, RnfD, RnfE and RnfG. It depends on FMN as a cofactor.

It localises to the cell inner membrane. Part of a membrane-bound complex that couples electron transfer with translocation of ions across the membrane. This chain is Ion-translocating oxidoreductase complex subunit D, found in Shewanella baltica (strain OS223).